Reading from the N-terminus, the 352-residue chain is Cyclin-O (352 aa).

The tract at residues Met1–Lys40 is disordered. Positions Pro28–Lys40 are enriched in basic residues. Position 83 is a phosphoserine (Ser83).

It belongs to the cyclin family. In terms of tissue distribution, present in respiratory cells (at protein level). Expressed in multiciliated tissue in brain and fallopian tube (at protein level). Highly expressed in oocytes.

The protein localises to the cytoplasm. Its subcellular location is the nucleus. The protein resides in the nucleolus. In terms of biological role, specifically required for generation of multiciliated cells, possibly by promoting a cell cycle state compatible with centriole amplification and maturation. Acts downstream of MCIDAS to promote mother centriole amplification and maturation in preparation for apical docking. May be involved in apoptosis in lymphoid cells; however, this result requires additional evidences in vivo. May be involved in oocyte meiotic resumption in oocytes. The protein is Cyclin-O of Mus musculus (Mouse).